Here is a 224-residue protein sequence, read N- to C-terminus: ATP phosphoribosyltransferase (224 aa).

The protein belongs to the ATP phosphoribosyltransferase family. Short subfamily. As to quaternary structure, heteromultimer composed of HisG and HisZ subunits.

Its subcellular location is the cytoplasm. The catalysed reaction is 1-(5-phospho-beta-D-ribosyl)-ATP + diphosphate = 5-phospho-alpha-D-ribose 1-diphosphate + ATP. It functions in the pathway amino-acid biosynthesis; L-histidine biosynthesis; L-histidine from 5-phospho-alpha-D-ribose 1-diphosphate: step 1/9. Catalyzes the condensation of ATP and 5-phosphoribose 1-diphosphate to form N'-(5'-phosphoribosyl)-ATP (PR-ATP). Has a crucial role in the pathway because the rate of histidine biosynthesis seems to be controlled primarily by regulation of HisG enzymatic activity. This chain is ATP phosphoribosyltransferase, found in Cupriavidus pinatubonensis (strain JMP 134 / LMG 1197) (Cupriavidus necator (strain JMP 134)).